Reading from the N-terminus, the 96-residue chain is MDHKLYLRIKKTNQHLYAYVLYKGKQLVTVSTNQKIIRNDINKVNKKIYPEILGYLLSDKIKEFGFLNIYLKRTYLFHGKVKTIVDVLRKNGVVIY.

This sequence belongs to the universal ribosomal protein uL18 family.

Its subcellular location is the mitochondrion. This chain is Large ribosomal subunit protein uL18m (RPL18), found in Reclinomonas americana.